The following is a 24-amino-acid chain: MQWTTPSYTDLRFGFEITMYIANR.

Residues 16–20 constitute a cross-link (pyrroloquinoline quinone (Glu-Tyr)); it reads EITMY.

Belongs to the PqqA family.

The protein operates within cofactor biosynthesis; pyrroloquinoline quinone biosynthesis. Its function is as follows. Required for coenzyme pyrroloquinoline quinone (PQQ) biosynthesis. PQQ is probably formed by cross-linking a specific glutamate to a specific tyrosine residue and excising these residues from the peptide. This chain is Coenzyme PQQ synthesis protein A, found in Burkholderia cenocepacia (strain ATCC BAA-245 / DSM 16553 / LMG 16656 / NCTC 13227 / J2315 / CF5610) (Burkholderia cepacia (strain J2315)).